A 199-amino-acid chain; its full sequence is Lysine exporter LysE (199 aa).

5 helical membrane-spanning segments follow: residues 6–26 (VVGF…NAFV), 42–62 (LCTV…GALI), 68–88 (ALNV…LLAA), 144–164 (WLFG…LGFG), and 178–198 (WRIL…SLTV).

This sequence belongs to the LysE/ArgO transporter (TC 2.A.75) family.

The protein localises to the cell inner membrane. Catalyzes the efflux of L-lysine. The protein is Lysine exporter LysE of Mycobacterium bovis (strain ATCC BAA-935 / AF2122/97).